The following is a 197-amino-acid chain: C-type lectin domain family 3 member A (197 aa).

Residues 1–24 (MAKNGLVIYILVITLLLDQTSCHA) form the signal peptide. 3 disulfides stabilise this stretch: cysteine 68/cysteine 78, cysteine 95/cysteine 191, and cysteine 167/cysteine 183. The region spanning 74 to 192 (FHKKCYLAAE…CHSSKRYICE (119 aa)) is the C-type lectin domain.

It localises to the secreted. Its function is as follows. Promotes cell adhesion to laminin and fibronectin. This Bos taurus (Bovine) protein is C-type lectin domain family 3 member A (CLEC3A).